A 273-amino-acid chain; its full sequence is MRKIAIYGKGGIGKSTTTQNTVAGLVEAGHKIMVVGCDPKADSTRLLLNGLAQKTVLDTLREEGEDVVLEDVLKLGYGGTMCTESGGPEPGVGCAGRGIITSINLLEQLGAYENEELDYVFYDVLGDVVCGGFAMPMREGKAQEIYIVVSGEMMAMYAANNICKGIVKFAESGGIRLGGLICNSRAVDFEKDMIEALAEKLGTQMIHFIPRENVVQRAEINRKTVIEYEPEHSQADEYRMLAKKINENEKYVIPTPIEIEELEELLVTYGIAS.

8–15 (GKGGIGKS) contributes to the ATP binding site. A [4Fe-4S] cluster-binding site is contributed by Cys-94. Position 97 is an ADP-ribosylarginine; by dinitrogenase reductase ADP-ribosyltransferase (Arg-97). Residue Cys-130 participates in [4Fe-4S] cluster binding.

Belongs to the NifH/BchL/ChlL family. Homodimer. Requires [4Fe-4S] cluster as cofactor. Post-translationally, the reversible ADP-ribosylation of Arg-97 inactivates the nitrogenase reductase and regulates nitrogenase activity.

It carries out the reaction N2 + 8 reduced [2Fe-2S]-[ferredoxin] + 16 ATP + 16 H2O = H2 + 8 oxidized [2Fe-2S]-[ferredoxin] + 2 NH4(+) + 16 ADP + 16 phosphate + 6 H(+). Its function is as follows. The key enzymatic reactions in nitrogen fixation are catalyzed by the nitrogenase complex, which has 2 components: the iron protein and the molybdenum-iron protein. This is Nitrogenase iron protein from Desulforapulum autotrophicum (strain ATCC 43914 / DSM 3382 / VKM B-1955 / HRM2) (Desulfobacterium autotrophicum).